The chain runs to 445 residues: Methionine aminopeptidase 2-3 (445 aa).

Residues 14–115 are disordered; it reads ISDADANGAD…ENRYRTTSEE (102 aa). Positions 38 to 47 are enriched in acidic residues; sequence EDDDSDDDVA. Over residues 60–75 the composition is skewed to basic residues; sequence AKKKKNKKRKPKKKQP. The segment covering 85 to 95 has biased composition (polar residues); that stretch reads PLSQLFPNNTY. Over residues 97-115 the composition is skewed to basic and acidic residues; sequence KGEEVEYKDENRYRTTSEE. Residue His-198 participates in substrate binding. Positions 218, 229, and 298 each coordinate a divalent metal cation. His-306 lines the substrate pocket. Positions 331 and 426 each coordinate a divalent metal cation.

Belongs to the peptidase M24A family. Methionine aminopeptidase eukaryotic type 2 subfamily. Co(2+) is required as a cofactor. It depends on Zn(2+) as a cofactor. Requires Mn(2+) as cofactor. The cofactor is Fe(2+).

The protein resides in the cytoplasm. The enzyme catalyses Release of N-terminal amino acids, preferentially methionine, from peptides and arylamides.. Its function is as follows. Cotranslationally removes the N-terminal methionine from nascent proteins. The N-terminal methionine is often cleaved when the second residue in the primary sequence is small and uncharged (Met-Ala-, Cys, Gly, Pro, Ser, Thr, or Val). The protein is Methionine aminopeptidase 2-3 of Neosartorya fischeri (strain ATCC 1020 / DSM 3700 / CBS 544.65 / FGSC A1164 / JCM 1740 / NRRL 181 / WB 181) (Aspergillus fischerianus).